Here is a 147-residue protein sequence, read N- to C-terminus: Nucleoside diphosphate kinase (147 aa).

ATP-binding residues include Lys9, Phe57, Arg85, Thr91, Arg102, and Asn112. The active-site Pros-phosphohistidine intermediate is His115.

This sequence belongs to the NDK family. Homotetramer. It depends on Mg(2+) as a cofactor.

Its subcellular location is the cytoplasm. The catalysed reaction is a 2'-deoxyribonucleoside 5'-diphosphate + ATP = a 2'-deoxyribonucleoside 5'-triphosphate + ADP. It carries out the reaction a ribonucleoside 5'-diphosphate + ATP = a ribonucleoside 5'-triphosphate + ADP. Major role in the synthesis of nucleoside triphosphates other than ATP. The ATP gamma phosphate is transferred to the NDP beta phosphate via a ping-pong mechanism, using a phosphorylated active-site intermediate. The polypeptide is Nucleoside diphosphate kinase (Brevibacillus brevis (strain 47 / JCM 6285 / NBRC 100599)).